A 459-amino-acid chain; its full sequence is Bifunctional protein GlmU (459 aa).

Residues 1–230 (MSNRFAVILA…FDETLGVNDR (230 aa)) are pyrophosphorylase. Residues 9–12 (LAAG), Lys-23, Gln-73, and 78–79 (GT) each bind UDP-N-acetyl-alpha-D-glucosamine. Asp-103 is a Mg(2+) binding site. UDP-N-acetyl-alpha-D-glucosamine-binding residues include Gly-140, Glu-155, Asn-170, and Asn-228. Asn-228 provides a ligand contact to Mg(2+). The interval 231 to 251 (VALSQAEIIMKNRINRKNMVN) is linker. The interval 252–459 (GVTIIDPSNT…VDQLLNKKKS (208 aa)) is N-acetyltransferase. Residues Arg-333 and Lys-351 each contribute to the UDP-N-acetyl-alpha-D-glucosamine site. His-363 (proton acceptor) is an active-site residue. UDP-N-acetyl-alpha-D-glucosamine is bound by residues Tyr-366 and Asn-377. Acetyl-CoA-binding positions include 386–387 (NY), Ala-423, and Arg-440.

In the N-terminal section; belongs to the N-acetylglucosamine-1-phosphate uridyltransferase family. This sequence in the C-terminal section; belongs to the transferase hexapeptide repeat family. In terms of assembly, homotrimer. Mg(2+) serves as cofactor.

The protein resides in the cytoplasm. It catalyses the reaction alpha-D-glucosamine 1-phosphate + acetyl-CoA = N-acetyl-alpha-D-glucosamine 1-phosphate + CoA + H(+). The enzyme catalyses N-acetyl-alpha-D-glucosamine 1-phosphate + UTP + H(+) = UDP-N-acetyl-alpha-D-glucosamine + diphosphate. It participates in nucleotide-sugar biosynthesis; UDP-N-acetyl-alpha-D-glucosamine biosynthesis; N-acetyl-alpha-D-glucosamine 1-phosphate from alpha-D-glucosamine 6-phosphate (route II): step 2/2. The protein operates within nucleotide-sugar biosynthesis; UDP-N-acetyl-alpha-D-glucosamine biosynthesis; UDP-N-acetyl-alpha-D-glucosamine from N-acetyl-alpha-D-glucosamine 1-phosphate: step 1/1. Its pathway is bacterial outer membrane biogenesis; LPS lipid A biosynthesis. Catalyzes the last two sequential reactions in the de novo biosynthetic pathway for UDP-N-acetylglucosamine (UDP-GlcNAc). The C-terminal domain catalyzes the transfer of acetyl group from acetyl coenzyme A to glucosamine-1-phosphate (GlcN-1-P) to produce N-acetylglucosamine-1-phosphate (GlcNAc-1-P), which is converted into UDP-GlcNAc by the transfer of uridine 5-monophosphate (from uridine 5-triphosphate), a reaction catalyzed by the N-terminal domain. This chain is Bifunctional protein GlmU, found in Bacillus mycoides (strain KBAB4) (Bacillus weihenstephanensis).